We begin with the raw amino-acid sequence, 293 residues long: Carbapenem-hydrolyzing beta-lactamase KPC (293 aa).

A signal peptide spans 1–24 (MSLYRRLVLLSCLSWPLAGFSATA). Residue Ser-69 is the Acyl-ester intermediate of the active site. Glu-167 functions as the Proton acceptor in the catalytic mechanism. 233-235 (KTG) contributes to the substrate binding site.

It belongs to the class-A beta-lactamase family.

The enzyme catalyses a beta-lactam + H2O = a substituted beta-amino acid. With respect to regulation, not inhibited by EDTA, inhibited by clavulanic acid and tazobactam. In terms of biological role, hydrolyzes carbapenems, penicillins, cephalosporins and aztreonam with varying efficiency. The protein is Carbapenem-hydrolyzing beta-lactamase KPC (bla) of Klebsiella oxytoca.